We begin with the raw amino-acid sequence, 97 residues long: U-scoloptoxin(10)-Sa2a (97 aa).

An N-terminal signal peptide occupies residues 1–23 (MNKSMLIFFTILFLTYIIEEKEA).

The protein belongs to the scoloptoxin-10 family. Contains 3 disulfide bonds. Expressed by the venom gland.

It localises to the secreted. The protein is U-scoloptoxin(10)-Sa2a of Scolopendra alternans (Florida Keys giant centipede).